Consider the following 89-residue polypeptide: Small ribosomal subunit protein uS15 (89 aa).

Belongs to the universal ribosomal protein uS15 family. As to quaternary structure, part of the 30S ribosomal subunit. Forms a bridge to the 50S subunit in the 70S ribosome, contacting the 23S rRNA.

Its function is as follows. One of the primary rRNA binding proteins, it binds directly to 16S rRNA where it helps nucleate assembly of the platform of the 30S subunit by binding and bridging several RNA helices of the 16S rRNA. In terms of biological role, forms an intersubunit bridge (bridge B4) with the 23S rRNA of the 50S subunit in the ribosome. In Corynebacterium kroppenstedtii (strain DSM 44385 / JCM 11950 / CIP 105744 / CCUG 35717), this protein is Small ribosomal subunit protein uS15.